Consider the following 690-residue polypeptide: MIRARDLLLLALLGFISSALGLKVSSGYHIVHNQPQSSFPNYHGFSYLQGSAPYVIGNSLPTSPAPQNPFSSPASPPVSAYGYSFPTAGRVSCAAPPAVCEKTAYRTLDGSCNHLEQPGLGVANSKYGRLLTPKYADGISAPTRSVTGDELPSARLVSLVAFGEQDVPDPEFTLHNMQWGQIMTHDMSMQAGGTQSKKHPTRCCTDDGRLIGLDTAHKTCFAIIVPPHDPAYSQVGTECLNFVRTLTDRDSNCQYQGGPAEQLTVVTSYLDLSLVYGNSIQQNSDIREFQGGRMIVEERNGAKWLPLSRNVTGDCDAVDASEVCYRSGDVRVNQNPGLAILQTILLREHNRIADALSALNPHYDDRTLFQEARKINIAQYQQISYYEWLPIFLGGENMLKNRLIYKAPSGSYINDFDPNIDPSVLNEHATAAFRYFHSQIEGRLDLLSELRQVLGSLTLSDWFNRPGIIEVGDNFDSLTRGHATQPEELTDINFDRQIKHFLFRRNMPFGSDLRSLDIQRNRDHGLASYNDMREFCGLRRAHSWEGYGDLISPPILEKLKSLYPSHEDVDLTVGASLEAHVAGALAGPTFLCILTEQFYRTRVGDRFFFENGDKLTGFTPDQLEELRKASMARLLCDNGNHISSMQPEAFRTVSHSNPIIPCSNIPQVDLTKWIDQKLYATVDPSHYGKK.

The signal sequence occupies residues 1–20 (MIRARDLLLLALLGFISSAL). A disulfide bond links cysteine 100 and cysteine 112. Catalysis depends on histidine 185, which acts as the Proton acceptor. Asparagine 310 is a glycosylation site (N-linked (GlcNAc...) asparagine). Cysteine 315 and cysteine 324 are joined by a disulfide. Histidine 437 contacts heme b. Disulfide bonds link cysteine 536–cysteine 592 and cysteine 636–cysteine 662.

It belongs to the peroxidase family. XPO subfamily. It depends on heme b as a cofactor.

It localises to the secreted. It carries out the reaction 2 a phenolic donor + H2O2 = 2 a phenolic radical donor + 2 H2O. Its function is as follows. Involved in the chorion hardening process, through protein cross-linking mediated by the formation of di- and tri-tyrosine bonds. The chain is Peroxidase (Pxd) from Drosophila melanogaster (Fruit fly).